The primary structure comprises 314 residues: Putative methylthioribose-1-phosphate isomerase (314 aa).

Residues 45–47 (RGA), Arg-79, and Gln-177 each bind substrate. Asp-218 functions as the Proton donor in the catalytic mechanism. 227–228 (NK) lines the substrate pocket.

It belongs to the eIF-2B alpha/beta/delta subunits family. MtnA subfamily.

The catalysed reaction is 5-(methylsulfanyl)-alpha-D-ribose 1-phosphate = 5-(methylsulfanyl)-D-ribulose 1-phosphate. Catalyzes the interconversion of methylthioribose-1-phosphate (MTR-1-P) into methylthioribulose-1-phosphate (MTRu-1-P). The chain is Putative methylthioribose-1-phosphate isomerase from Methanosphaera stadtmanae (strain ATCC 43021 / DSM 3091 / JCM 11832 / MCB-3).